The sequence spans 496 residues: MSLWYIIVAFVFFSSMIIVRIIRKTKKNLPPGPPRLPIIGNLHQLGSKPHRSMFKLSETYGPLMSLKFGSVSTVVASTPETVKEVLKTFDVECCSRPNMTYPARVTYNLKDLCFSPYSKYWREVRKMTVVELYTAKRVQSFQHTRKEEVAALVDFIKQAASLEKPVNLNKKLMKLSGSVICRVAFGINLQGSKLENTYEEVIQGTVELVGSFAAADYFPVVGRIIDRITGLHSKCEKLFKAMDAFFDQSIKHHLEDEIIKDDIIDLLLKMERGETTLGEFQLTRDHTKGILANILNAGIDTSAQVMTWVMTYLISNPRVLKKAQAEVREVIKHKDDIIEEDIERLQYLKMVIKETFRINPLVPLLIPREASKDVKIGGYNIPKKTWIHVNIWAIHRNPNVWKDPEAFIPERFMDSQIDYKGLNFELLPFGSGRRICPGIGMGMALVHLTLINLLYRFDWKLPEGMKVADVDLEESYGLVCPKKIPLQLIPVLTQWT.

A helical membrane pass occupies residues 2–22; that stretch reads SLWYIIVAFVFFSSMIIVRII. A heme-binding site is contributed by Cys-436.

The protein belongs to the cytochrome P450 family. Heme serves as cofactor.

The protein resides in the membrane. This chain is Cytochrome P450 71B12 (CYP71B12), found in Arabidopsis thaliana (Mouse-ear cress).